The following is a 592-amino-acid chain: A-type ATP synthase subunit A (592 aa).

Residue 234–241 (GPFGSGKT) participates in ATP binding.

Belongs to the ATPase alpha/beta chains family. As to quaternary structure, has multiple subunits with at least A(3), B(3), C, D, E, F, H, I and proteolipid K(x).

It localises to the cell membrane. It carries out the reaction ATP + H2O + 4 H(+)(in) = ADP + phosphate + 5 H(+)(out). Functionally, produces ATP from ADP in the presence of a proton gradient across the membrane. The archaeal alpha chain is a catalytic subunit. In terms of biological role, component of the A-type ATP synthase that produces ATP from ADP in the presence of a proton gradient across the membrane. The A chain is the catalytic subunit. The sequence is that of A-type ATP synthase subunit A from Sulfolobus acidocaldarius (strain ATCC 33909 / DSM 639 / JCM 8929 / NBRC 15157 / NCIMB 11770).